Here is a 421-residue protein sequence, read N- to C-terminus: 4-hydroxy-3-methylbut-2-en-1-yl diphosphate synthase (flavodoxin) (421 aa).

Cys-311, Cys-314, Cys-357, and Glu-364 together coordinate [4Fe-4S] cluster.

This sequence belongs to the IspG family. The cofactor is [4Fe-4S] cluster.

It catalyses the reaction (2E)-4-hydroxy-3-methylbut-2-enyl diphosphate + oxidized [flavodoxin] + H2O + 2 H(+) = 2-C-methyl-D-erythritol 2,4-cyclic diphosphate + reduced [flavodoxin]. Its pathway is isoprenoid biosynthesis; isopentenyl diphosphate biosynthesis via DXP pathway; isopentenyl diphosphate from 1-deoxy-D-xylulose 5-phosphate: step 5/6. Its function is as follows. Converts 2C-methyl-D-erythritol 2,4-cyclodiphosphate (ME-2,4cPP) into 1-hydroxy-2-methyl-2-(E)-butenyl 4-diphosphate. This is 4-hydroxy-3-methylbut-2-en-1-yl diphosphate synthase (flavodoxin) from Xanthomonas axonopodis pv. citri (strain 306).